The chain runs to 508 residues: MNNTNTNTNNKNLASSSASVIFSKYINNNNNKLIPFKIKNSDLGRTRYFPPISKEWKNSIYVFNHNNLKNLPLFDININSLIKDYFNLQFKDKILFKKKRLSKVKVVSLNKIYASKAEIKHTNTKAILTVYTFNREKISLYKKIKKLKKSFYFVFDKIISFSERVILSGVPIRVDKDGKVLSNLYLPFRLRGVLPWITESHVNIWRKIIIASLYKELILLRKYKLRLDLNKYKFEEKLLYRLNNLIMKYYNKKVEFNIVNMRSFLLNSDILTKILALKLKNRNARVIKIMDVILNKANLPKINRVQEKASLIKSVDWNLLENKFKNLNLSFILNDASYAERNNLSELLNKLYYNVLLVSQKGVWALRSPKGEQPSFHSKSGGSPTKFIQKGAGAASLGGNAKAQPKVSSFAKAKKYAKIYQIIFNSINYKNMGGLRLEIKGRLTKRYRADRSLFKVKWKGGLKNLDSSYKGLSSVNMRGYAKPNVEYSIFTSKRRIGAFAVKGWVSGK.

This sequence belongs to the universal ribosomal protein uS3 family. In terms of assembly, component of the mitochondrial small ribosomal subunit (mt-SSU). Mature N.crassa 74S mitochondrial ribosomes consist of a small (37S) and a large (54S) subunit. The 37S small subunit contains a 16S ribosomal RNA (16S mt-rRNA) and 32 different proteins. The 54S large subunit contains a 23S rRNA (23S mt-rRNA) and 42 different proteins. uS3m, uS4m and uS5m form the narrow entry site of the mRNA channel.

The protein resides in the mitochondrion. In terms of biological role, component of the mitochondrial ribosome (mitoribosome), a dedicated translation machinery responsible for the synthesis of mitochondrial genome-encoded proteins, including at least some of the essential transmembrane subunits of the mitochondrial respiratory chain. The mitoribosomes are attached to the mitochondrial inner membrane and translation products are cotranslationally integrated into the membrane. uS3m is essential for mitochondrial protein synthesis and required for the maturation of small ribosomal subunits. This is Small ribosomal subunit protein uS3m (var1) from Neurospora crassa (strain ATCC 24698 / 74-OR23-1A / CBS 708.71 / DSM 1257 / FGSC 987).